Here is a 189-residue protein sequence, read N- to C-terminus: Small ribosomal subunit protein uS5 (189 aa).

Residues 27-90 (FEERLLEAAR…EDAKKKTIRV (64 aa)) form the S5 DRBM domain.

This sequence belongs to the universal ribosomal protein uS5 family. In terms of assembly, part of the 30S ribosomal subunit. Contacts proteins S4 and S8.

Its function is as follows. With S4 and S12 plays an important role in translational accuracy. Functionally, located at the back of the 30S subunit body where it stabilizes the conformation of the head with respect to the body. The sequence is that of Small ribosomal subunit protein uS5 from Hydrogenobaculum sp. (strain Y04AAS1).